The sequence spans 586 residues: Phosphomethylpyrimidine synthase (586 aa).

Positions 1 to 59 are disordered; that stretch reads MKQSVSAEQIELKSSLPGSKKVYVDGPREGMKVPMREIEQSETNGVPNPPIRVYDTSGP. The segment covering 22–39 has biased composition (basic and acidic residues); it reads VYVDGPREGMKVPMREIE. Substrate is bound by residues N193, M222, Y251, H287, 307-309, 348-351, and E387; these read SRG and DGLR. H391 is a Zn(2+) binding site. Y414 contacts substrate. Residue H455 coordinates Zn(2+). The [4Fe-4S] cluster site is built by C535, C538, and C543.

This sequence belongs to the ThiC family. [4Fe-4S] cluster serves as cofactor.

It catalyses the reaction 5-amino-1-(5-phospho-beta-D-ribosyl)imidazole + S-adenosyl-L-methionine = 4-amino-2-methyl-5-(phosphooxymethyl)pyrimidine + CO + 5'-deoxyadenosine + formate + L-methionine + 3 H(+). The protein operates within cofactor biosynthesis; thiamine diphosphate biosynthesis. Its function is as follows. Catalyzes the synthesis of the hydroxymethylpyrimidine phosphate (HMP-P) moiety of thiamine from aminoimidazole ribotide (AIR) in a radical S-adenosyl-L-methionine (SAM)-dependent reaction. In Bacillus cereus (strain ATCC 14579 / DSM 31 / CCUG 7414 / JCM 2152 / NBRC 15305 / NCIMB 9373 / NCTC 2599 / NRRL B-3711), this protein is Phosphomethylpyrimidine synthase.